The sequence spans 342 residues: Anthranilate phosphoribosyltransferase (342 aa).

5-phospho-alpha-D-ribose 1-diphosphate is bound by residues G90, 93 to 94, T98, 100 to 103, 118 to 126, and S130; these read GS, NIST, and KHGNRRATS. Position 90 (G90) interacts with anthranilate. S102 provides a ligand contact to Mg(2+). Residue N121 participates in anthranilate binding. R176 contributes to the anthranilate binding site. Residues D235 and E236 each contribute to the Mg(2+) site.

The protein belongs to the anthranilate phosphoribosyltransferase family. Homodimer. Mg(2+) is required as a cofactor.

The enzyme catalyses N-(5-phospho-beta-D-ribosyl)anthranilate + diphosphate = 5-phospho-alpha-D-ribose 1-diphosphate + anthranilate. The protein operates within amino-acid biosynthesis; L-tryptophan biosynthesis; L-tryptophan from chorismate: step 2/5. Functionally, catalyzes the transfer of the phosphoribosyl group of 5-phosphorylribose-1-pyrophosphate (PRPP) to anthranilate to yield N-(5'-phosphoribosyl)-anthranilate (PRA). The protein is Anthranilate phosphoribosyltransferase of Rhodopirellula baltica (strain DSM 10527 / NCIMB 13988 / SH1).